Reading from the N-terminus, the 626-residue chain is (R)-linalool synthase 2, chloroplastic (626 aa).

Residues 1–21 constitute a chloroplast transit peptide; the sequence is MAFVSIAPLASRCCVHKSFVS. Mg(2+)-binding residues include Asp-377, Asp-381, and Glu-529. The DDXXD motif motif lies at 377-381; that stretch reads DDIYD.

Belongs to the terpene synthase family. Tpsd subfamily. Mg(2+) is required as a cofactor. The cofactor is Mn(2+).

Its subcellular location is the plastid. It is found in the chloroplast. It catalyses the reaction (2E)-geranyl diphosphate + H2O = (R)-linalool + diphosphate. It functions in the pathway terpene metabolism; oleoresin biosynthesis. Its function is as follows. Terpene synthase (mono-TPS) involved in the biosynthesis of monoterpene natural products included in conifer oleoresin secretions and volatile emissions; these compounds contribute to biotic and abiotic stress defense against herbivores and pathogens. Catalyzes the conversion of (2E)-geranyl diphosphate (GPP) to (R)-linalool. This chain is (R)-linalool synthase 2, chloroplastic, found in Picea sitchensis (Sitka spruce).